The sequence spans 465 residues: Protein CitXG (465 aa).

The tract at residues 1-182 (MQHFFTTFST…QSLAQNHDFA (182 aa)) is apo-citrate lyase phosphoribosyl-dephospho-CoA transferase. A 2-(5''-triphosphoribosyl)-3'-dephosphocoenzyme-A synthase region spans residues 183 to 465 (EHIGEQVYLA…TIFFLSFRGN (283 aa)).

The protein in the N-terminal section; belongs to the CitX family. This sequence in the C-terminal section; belongs to the CitG/MdcB family.

It catalyses the reaction apo-[citrate lyase ACP] + 2'-(5''-triphospho-alpha-D-ribosyl)-3'-dephospho-CoA = holo-[citrate lyase ACP] + diphosphate. The catalysed reaction is 3'-dephospho-CoA + ATP = 2'-(5''-triphospho-alpha-D-ribosyl)-3'-dephospho-CoA + adenine. Its function is as follows. Bifunctional enzyme that catalyzes formation of 2-(5''-triphosphoribosyl)-3'-dephosphocoenzyme-A, and then the transfer of this prosthetic group precursor to the apo-acyl carrier protein (gamma chain) of the citrate lyase to yield the holo-acyl carrier protein. The sequence is that of Protein CitXG (citXG) from Haemophilus influenzae (strain ATCC 51907 / DSM 11121 / KW20 / Rd).